Here is a 559-residue protein sequence, read N- to C-terminus: Mercuric reductase (559 aa).

The HMA domain maps to 1-64 (MYLNITGMTC…AVAGLGYKAT (64 aa)). The a metal cation site is built by C10 and C13. 3 residues coordinate FAD: A108, G128, and T133. C134 and C139 are disulfide-bonded. FAD contacts are provided by K143, A209, D401, and V409. Residues C556 and C557 each contribute to the Hg(2+) site.

The protein belongs to the class-I pyridine nucleotide-disulfide oxidoreductase family. Homodimer. The cofactor is FAD.

The catalysed reaction is Hg + NADP(+) + H(+) = Hg(2+) + NADPH. Resistance to Hg(2+) in bacteria appears to be governed by a specialized system which includes mercuric reductase. MerA protein is responsible for volatilizing mercury as Hg(0). This is Mercuric reductase (merA) from Alcaligenes sp.